Reading from the N-terminus, the 250-residue chain is Probable transcriptional regulatory protein SCO1521 (250 aa).

It belongs to the TACO1 family.

It localises to the cytoplasm. The chain is Probable transcriptional regulatory protein SCO1521 from Streptomyces coelicolor (strain ATCC BAA-471 / A3(2) / M145).